The primary structure comprises 393 residues: Pyruvate dehydrogenase E1 component subunit alpha-2, mitochondrial (393 aa).

The transit peptide at 1-28 (MALSRLSSRSNTFLKPAITALPSSIRRH) directs the protein to the mitochondrion. The pyruvate site is built by His94, Tyr120, Arg121, Gly169, Val171, Asp200, Gly201, Ala202, Asn229, and Tyr231. 8 residues coordinate thiamine diphosphate: Tyr120, Arg121, Gly169, Val171, Asp200, Gly201, Ala202, and Asn229. Asp200 serves as a coordination point for Mg(2+). The Mg(2+) site is built by Asn229 and Tyr231. His295 serves as a coordination point for thiamine diphosphate.

As to quaternary structure, tetramer of 2 alpha and 2 beta subunits. The cofactor is thiamine diphosphate. It depends on Mg(2+) as a cofactor.

It localises to the mitochondrion matrix. It catalyses the reaction N(6)-[(R)-lipoyl]-L-lysyl-[protein] + pyruvate + H(+) = N(6)-[(R)-S(8)-acetyldihydrolipoyl]-L-lysyl-[protein] + CO2. E1 activity is regulated by phosphorylation (inactivation) and dephosphorylation (activation) of the alpha subunit. The pyruvate dehydrogenase complex catalyzes the overall conversion of pyruvate to acetyl-CoA and CO(2). It contains multiple copies of three enzymatic components: pyruvate dehydrogenase (E1), dihydrolipoamide acetyltransferase (E2) and lipoamide dehydrogenase (E3). The protein is Pyruvate dehydrogenase E1 component subunit alpha-2, mitochondrial (IAR4) of Arabidopsis thaliana (Mouse-ear cress).